A 339-amino-acid polypeptide reads, in one-letter code: UDP-galactose transporter homolog 1 (339 aa).

Helical transmembrane passes span 5-25, 43-63, 91-111, 138-158, 171-191, 208-228, 246-268, 273-295, and 301-321; these read ILKHVFAVGGIYCSFLTWGLL, VPYIVALVQATIAMICGLIYI, AISAPLAAYSLSYVDFLTYML, LVVLLVTVGITIFTLDGHKPS, SSLIGFVLLGSSLFLDGLTNA, HLMFALNFFLIVWNVIYMVLV, ISRYLLAYACCGAIGQCFIFYTL, SLVLVMVTVTRKMFSMILSIIVY, and LWQWVGIVIVFTGVVCESMGK.

It belongs to the nucleotide-sugar transporter family. SLC35B subfamily.

The protein localises to the endoplasmic reticulum membrane. May be involved in specific transport of UDP-Gal from the cytosol to the Golgi lumen. Involved in the maintenance of optimal conditions for the folding of secretory pathway proteins in the endoplasmic reticulum. The protein is UDP-galactose transporter homolog 1 (HUT1) of Kluyveromyces lactis (strain ATCC 8585 / CBS 2359 / DSM 70799 / NBRC 1267 / NRRL Y-1140 / WM37) (Yeast).